A 387-amino-acid polypeptide reads, in one-letter code: Chlorophyll synthase, chloroplastic (387 aa).

A chloroplast-targeting transit peptide spans 1-57 (MTSILNTVSTIHSSRVTSVDRVGVLSLRNSDSVEFTRRRSGFSTLIYESPGRRFVVR). The tract at residues 62–81 (DTDKVKSQTPDKAPAGGSSI) is disordered. The next 7 membrane-spanning stretches (helical) occupy residues 182–202 (VITQ…ILDV), 210–230 (TVFY…APPL), 241–261 (FALG…LFGT), 266–286 (VVVL…VNDF), 311–331 (WICV…LLAS), 336–356 (YALA…KYFL), and 364–384 (VKYQ…TALA).

Belongs to the UbiA prenyltransferase family. Chlorophyll synthase subfamily. Low level in flower buds, flowers, stems, leaves, greening cotyledons and immature siliques, but not in mature siliques or seeds.

The protein localises to the plastid. Its subcellular location is the chloroplast membrane. The catalysed reaction is phytyl diphosphate + chlorophyllide a + H(+) = chlorophyll a + diphosphate. Its pathway is porphyrin-containing compound metabolism; chlorophyll biosynthesis. In terms of biological role, involved in one of the last steps of the biosynthesis of chlorophyll a. Catalyzes the esterification of chlorophillide a or b with a preference for geranylgeranyldiphosphate (GGPP) rather than for phytyldiphosphate (PhyPP). The sequence is that of Chlorophyll synthase, chloroplastic (CHLG) from Arabidopsis thaliana (Mouse-ear cress).